The primary structure comprises 506 residues: Glutamate--tRNA ligase (506 aa).

The short motif at 12-22 (PSPTGDPHVGT) is the 'HIGH' region element. The 'KMSKS' region motif lies at 253–257 (KLSKR). K256 serves as a coordination point for ATP.

This sequence belongs to the class-I aminoacyl-tRNA synthetase family. Glutamate--tRNA ligase type 1 subfamily. In terms of assembly, monomer.

The protein localises to the cytoplasm. It carries out the reaction tRNA(Glu) + L-glutamate + ATP = L-glutamyl-tRNA(Glu) + AMP + diphosphate. Catalyzes the attachment of glutamate to tRNA(Glu) in a two-step reaction: glutamate is first activated by ATP to form Glu-AMP and then transferred to the acceptor end of tRNA(Glu). The polypeptide is Glutamate--tRNA ligase (Chlamydia muridarum (strain MoPn / Nigg)).